A 423-amino-acid chain; its full sequence is Cell adhesion molecule CEACAM16 (423 aa).

A signal peptide spans 1 to 22 (MKMPLTWGSWFLLSAWILNAGA). An N-linked (GlcNAc...) asparagine glycan is attached at Asn-38. The interval 77-96 (ETPGPAHTGREAVRPDGSLD) is disordered. Residues 84 to 95 (TGREAVRPDGSL) are compositionally biased toward basic and acidic residues. Ig-like C2-type domains follow at residues 134–219 (PPTV…LNLT) and 224–310 (PERV…ASVV). An intrachain disulfide couples Cys-155 to Cys-202. Asn-217 carries an N-linked (GlcNAc...) asparagine glycan. The cysteines at positions 253 and 294 are disulfide-linked.

Belongs to the immunoglobulin superfamily. CEA family. Homooligomer; can for homodimers and homotetramers. Interacts with TECTA and TECTB.

It localises to the secreted. In terms of biological role, required for proper hearing, plays a role in maintaining the integrity of the tectorial membrane. This chain is Cell adhesion molecule CEACAM16, found in Rattus norvegicus (Rat).